A 305-amino-acid polypeptide reads, in one-letter code: UDP-3-O-acyl-N-acetylglucosamine deacetylase (305 aa).

Zn(2+) is bound by residues histidine 79, histidine 238, and aspartate 242. Histidine 265 functions as the Proton donor in the catalytic mechanism.

The protein belongs to the LpxC family. The cofactor is Zn(2+).

The catalysed reaction is a UDP-3-O-[(3R)-3-hydroxyacyl]-N-acetyl-alpha-D-glucosamine + H2O = a UDP-3-O-[(3R)-3-hydroxyacyl]-alpha-D-glucosamine + acetate. It participates in glycolipid biosynthesis; lipid IV(A) biosynthesis; lipid IV(A) from (3R)-3-hydroxytetradecanoyl-[acyl-carrier-protein] and UDP-N-acetyl-alpha-D-glucosamine: step 2/6. Functionally, catalyzes the hydrolysis of UDP-3-O-myristoyl-N-acetylglucosamine to form UDP-3-O-myristoylglucosamine and acetate, the committed step in lipid A biosynthesis. In Shigella dysenteriae serotype 1 (strain Sd197), this protein is UDP-3-O-acyl-N-acetylglucosamine deacetylase.